Consider the following 397-residue polypeptide: Transcription factor GATA-5 (397 aa).

Positions 48–116 (GCEPSPQPPE…SAGGRDGSAY (69 aa)) are disordered. A compositionally biased stretch (low complexity) spans 87–101 (PPGATAFPFAHSPSG). Positions 102–112 (PGSGGSAGGRD) are enriched in gly residues. 2 consecutive GATA-type zinc fingers follow at residues 189–213 (CVNC…CNAC) and 243–267 (CTNC…CNAC). Positions 281 to 356 (AMKKESIQTR…ASGQEDDSLA (76 aa)) are disordered. Residues 289-298 (TRKRKPKTIA) are compositionally biased toward basic residues. A compositionally biased stretch (low complexity) spans 310 to 335 (ASASPSAVASTDSSAATSKAKPSLAS).

It localises to the nucleus. Transcription factor required during cardiovascular development. Plays an important role in the transcriptional program(s) that underlies smooth muscle cell diversity. Binds to the functionally important CEF-1 nuclear protein binding site in the cardiac-specific slow/cardiac troponin C transcriptional enhancer. The protein is Transcription factor GATA-5 of Homo sapiens (Human).